Here is a 356-residue protein sequence, read N- to C-terminus: Phosphate acyltransferase (356 aa).

The protein belongs to the PlsX family. In terms of assembly, homodimer. Probably interacts with PlsY.

Its subcellular location is the cytoplasm. It carries out the reaction a fatty acyl-[ACP] + phosphate = an acyl phosphate + holo-[ACP]. Its pathway is lipid metabolism; phospholipid metabolism. Functionally, catalyzes the reversible formation of acyl-phosphate (acyl-PO(4)) from acyl-[acyl-carrier-protein] (acyl-ACP). This enzyme utilizes acyl-ACP as fatty acyl donor, but not acyl-CoA. The sequence is that of Phosphate acyltransferase from Shigella sonnei (strain Ss046).